The sequence spans 596 residues: Membrane protein insertase YidC (596 aa).

Transmembrane regions (helical) follow at residues 4 to 24 (NKLI…HFFD), 332 to 352 (LGWP…FSFI), 359 to 379 (YGLV…PLSY), 425 to 445 (LSGC…FNFF), 468 to 488 (IINL…FTLL), and 518 to 538 (PITF…YYFV). The segment covering 565–584 (KNKEKSANNKEGSFKKRFQD) has biased composition (basic and acidic residues). The disordered stretch occupies residues 565 to 596 (KNKEKSANNKEGSFKKRFQDAIKASASHKGKK).

It belongs to the OXA1/ALB3/YidC family. Type 1 subfamily. In terms of assembly, interacts with the Sec translocase complex via SecD. Specifically interacts with transmembrane segments of nascent integral membrane proteins during membrane integration.

Its subcellular location is the cell inner membrane. Its function is as follows. Required for the insertion and/or proper folding and/or complex formation of integral membrane proteins into the membrane. Involved in integration of membrane proteins that insert both dependently and independently of the Sec translocase complex, as well as at least some lipoproteins. Aids folding of multispanning membrane proteins. The polypeptide is Membrane protein insertase YidC (Amoebophilus asiaticus (strain 5a2)).